Consider the following 470-residue polypeptide: Glutamate--tRNA ligase (470 aa).

The 'HIGH' region motif lies at proline 15–glycine 25. Positions lysine 240 to arginine 244 match the 'KMSKS' region motif. Position 243 (lysine 243) interacts with ATP.

It belongs to the class-I aminoacyl-tRNA synthetase family. Glutamate--tRNA ligase type 1 subfamily. As to quaternary structure, monomer.

It is found in the cytoplasm. It carries out the reaction tRNA(Glu) + L-glutamate + ATP = L-glutamyl-tRNA(Glu) + AMP + diphosphate. Its function is as follows. Catalyzes the attachment of glutamate to tRNA(Glu) in a two-step reaction: glutamate is first activated by ATP to form Glu-AMP and then transferred to the acceptor end of tRNA(Glu). The protein is Glutamate--tRNA ligase of Caulobacter vibrioides (strain ATCC 19089 / CIP 103742 / CB 15) (Caulobacter crescentus).